The chain runs to 733 residues: Putative cyclic nucleotide-gated ion channel 9 (733 aa).

Residues 1 to 117 lie on the Cytoplasmic side of the membrane; sequence MLDCGKKAVK…DKFLLLCNKL (117 aa). A helical membrane pass occupies residues 118-138; the sequence is FVTSCILAVSVDPLFLYLPFV. Residues 139–151 lie on the Extracellular side of the membrane; that stretch reads KDNEKCIGIDRKL. A helical membrane pass occupies residues 152–172; sequence AIIATTLRTVIDAFYLFHMAL. Residues 173–207 lie on the Cytoplasmic side of the membrane; sequence RFRTAFVAPSSRVFGRGELVIDPAQIAKRYLQQYF. The helical transmembrane segment at 208 to 228 threads the bilayer; that stretch reads IIDFLSVLPLPQIVVWRFLYI. Over 229–239 the chain is Extracellular; that stretch reads SKGASVLATKR. Residues 240–260 form a helical membrane-spanning segment; the sequence is ALRSIILVQYIPRFIRLYPLS. Topologically, residues 261-280 are cytoplasmic; it reads SELKRTAGVFAETAWAGAAY. Residues 281–301 form a helical membrane-spanning segment; it reads YLLLYMLASHIVGAIWYLLAL. Residues 302–406 are Extracellular-facing; that stretch reads ERYNGCWTKV…GQGLETSTYP (105 aa). Residues 407 to 427 traverse the membrane as a helical segment; that stretch reads GEVIFSIALAIAGLLLFALLI. At 428–733 the chain is on the cytoplasmic side; sequence GNMQTYLQSL…EPDFSADDTS (306 aa). A nucleoside 3',5'-cyclic phosphate is bound by residues 513-637 and glutamate 584; that span reads LFEN…SRQV. The calmodulin-binding stretch occupies residues 629-644; the sequence is FRRLHSRQVQHTFRFY. Residues 649–678 enclose the IQ domain; sequence RTWAAIFIQAAWRRYVKKKKLEQLRKEEEE.

Belongs to the cyclic nucleotide-gated cation channel (TC 1.A.1.5) family. Homotetramer or heterotetramer.

The protein localises to the cell membrane. Functionally, putative cyclic nucleotide-gated ion channel. This Arabidopsis thaliana (Mouse-ear cress) protein is Putative cyclic nucleotide-gated ion channel 9 (CNGC9).